The chain runs to 311 residues: L-lactate dehydrogenase (311 aa).

Residues Val-12, Asp-33, Lys-38, Tyr-63, and 77–78 (GA) contribute to the NAD(+) site. 2 residues coordinate substrate: Gln-80 and Arg-86. NAD(+) contacts are provided by residues Ser-99, 116 to 118 (VTN), and Ser-141. Substrate is bound at residue 118 to 121 (NPVD). Residue 146-149 (DSSR) coordinates substrate. Residues Arg-151 and His-166 each coordinate beta-D-fructose 1,6-bisphosphate. His-173 acts as the Proton acceptor in catalysis. Tyr-219 carries the phosphotyrosine modification. Residue Thr-228 participates in substrate binding.

Belongs to the LDH/MDH superfamily. LDH family. As to quaternary structure, homotetramer.

The protein localises to the cytoplasm. The enzyme catalyses (S)-lactate + NAD(+) = pyruvate + NADH + H(+). The protein operates within fermentation; pyruvate fermentation to lactate; (S)-lactate from pyruvate: step 1/1. With respect to regulation, allosterically activated by fructose 1,6-bisphosphate (FBP). Catalyzes the conversion of lactate to pyruvate. This Thermoanaerobacterium saccharolyticum (strain DSM 8691 / JW/SL-YS485) protein is L-lactate dehydrogenase.